Here is a 74-residue protein sequence, read N- to C-terminus: ATP synthase subunit c (74 aa).

The next 2 helical transmembrane spans lie at 5-25 (LAYIGAGLAGMGTGIAALGVG) and 49-69 (LFIGIAFAEALGIFSFLVALL).

The protein belongs to the ATPase C chain family. In terms of assembly, F-type ATPases have 2 components, F(1) - the catalytic core - and F(0) - the membrane proton channel. F(1) has five subunits: alpha(3), beta(3), gamma(1), delta(1), epsilon(1). F(0) has three main subunits: a(1), b(2) and c(10-14). The alpha and beta chains form an alternating ring which encloses part of the gamma chain. F(1) is attached to F(0) by a central stalk formed by the gamma and epsilon chains, while a peripheral stalk is formed by the delta and b chains.

The protein resides in the cell inner membrane. Functionally, f(1)F(0) ATP synthase produces ATP from ADP in the presence of a proton or sodium gradient. F-type ATPases consist of two structural domains, F(1) containing the extramembraneous catalytic core and F(0) containing the membrane proton channel, linked together by a central stalk and a peripheral stalk. During catalysis, ATP synthesis in the catalytic domain of F(1) is coupled via a rotary mechanism of the central stalk subunits to proton translocation. Its function is as follows. Key component of the F(0) channel; it plays a direct role in translocation across the membrane. A homomeric c-ring of between 10-14 subunits forms the central stalk rotor element with the F(1) delta and epsilon subunits. This is ATP synthase subunit c from Ruegeria sp. (strain TM1040) (Silicibacter sp.).